The chain runs to 55 residues: Large ribosomal subunit protein bL33 (55 aa).

The segment covering 1–11 (MAKGGREKIKL) has biased composition (basic and acidic residues). The disordered stretch occupies residues 1-27 (MAKGGREKIKLESTAGTGHFYTTSKNK). Residues 14–24 (TAGTGHFYTTS) show a composition bias toward polar residues.

It belongs to the bacterial ribosomal protein bL33 family.

In Dechloromonas aromatica (strain RCB), this protein is Large ribosomal subunit protein bL33.